The sequence spans 324 residues: Olfactory receptor 1L3 (324 aa).

Topologically, residues 1 to 25 are extracellular; that stretch reads MGMSNLTRLSEFILLGLSSRSEDQR. N-linked (GlcNAc...) asparagine glycosylation is present at asparagine 5. Residues 26 to 49 traverse the membrane as a helical segment; that stretch reads PLFALFLIIYLVTLMGNLLIILAI. Residues 50–57 lie on the Cytoplasmic side of the membrane; it reads HSDPRLQN. Residues 58-79 traverse the membrane as a helical segment; the sequence is PMYFFLSILSFADICYTTVIVP. Residues 80 to 100 are Extracellular-facing; sequence KMLVNFLSEKKTISYAECLAQ. Cysteine 97 and cysteine 189 form a disulfide bridge. Residues 101–120 form a helical membrane-spanning segment; that stretch reads MYFFLVFGNIDSYLLAAMAI. The Cytoplasmic segment spans residues 121–139; the sequence is NRCVAICNPFHYVTVMNRR. The chain crosses the membrane as a helical span at residues 140 to 158; sequence CCVLLLAFPITFSYFHSLL. Residues 159-196 are Extracellular-facing; sequence HVLLVNRLTFCTSNVIHHFFCDVNPVLKLSCSSTFVNE. The chain crosses the membrane as a helical span at residues 197 to 219; the sequence is IVAMTEGLASVMAPFVCIIISYL. Over 220-236 the chain is Cytoplasmic; it reads RILIAVLKIPSAAGKHK. The chain crosses the membrane as a helical span at residues 237–259; the sequence is AFSTCSSHLTVVILFYGSISYVY. The Extracellular portion of the chain corresponds to 260–271; it reads LQPLSSYTVKDR. Residues 272–291 form a helical membrane-spanning segment; it reads IATINYTVLTSVLNPFIYSL. Residues 292–324 are Cytoplasmic-facing; the sequence is RNKDMKRGLQKLINKIKSQMSRFSTKTNKICGP.

Belongs to the G-protein coupled receptor 1 family.

The protein localises to the cell membrane. In terms of biological role, odorant receptor. The polypeptide is Olfactory receptor 1L3 (OR1L3) (Homo sapiens (Human)).